We begin with the raw amino-acid sequence, 42 residues long: Iota-conotoxin-like R11.16 (42 aa).

Disulfide bonds link Cys5–Cys19, Cys12–Cys22, Cys18–Cys27, and Cys21–Cys36.

Belongs to the conotoxin I1 superfamily. As to expression, expressed by the venom duct.

The protein localises to the secreted. Its function is as follows. Iota-conotoxins bind to voltage-gated sodium channels (Nav) and act as agonists by shifting the voltage-dependence of activation to more hyperpolarized levels. Produces general excitatory symptoms. This chain is Iota-conotoxin-like R11.16, found in Conus radiatus (Rayed cone).